Reading from the N-terminus, the 413-residue chain is Imidazolonepropionase (413 aa).

Residues H79 and H81 each coordinate Fe(3+). The Zn(2+) site is built by H79 and H81. Residues R88, Y151, and H184 each coordinate 4-imidazolone-5-propanoate. Residue Y151 participates in N-formimidoyl-L-glutamate binding. Residue H248 coordinates Fe(3+). Residue H248 coordinates Zn(2+). E251 contacts 4-imidazolone-5-propanoate. D322 lines the Fe(3+) pocket. D322 is a binding site for Zn(2+). N-formimidoyl-L-glutamate is bound by residues N324 and G326. S327 provides a ligand contact to 4-imidazolone-5-propanoate.

It belongs to the metallo-dependent hydrolases superfamily. HutI family. Requires Zn(2+) as cofactor. Fe(3+) serves as cofactor.

Its subcellular location is the cytoplasm. The enzyme catalyses 4-imidazolone-5-propanoate + H2O = N-formimidoyl-L-glutamate. Its pathway is amino-acid degradation; L-histidine degradation into L-glutamate; N-formimidoyl-L-glutamate from L-histidine: step 3/3. In terms of biological role, catalyzes the hydrolytic cleavage of the carbon-nitrogen bond in imidazolone-5-propanoate to yield N-formimidoyl-L-glutamate. It is the third step in the universal histidine degradation pathway. The sequence is that of Imidazolonepropionase from Fusobacterium nucleatum subsp. nucleatum (strain ATCC 25586 / DSM 15643 / BCRC 10681 / CIP 101130 / JCM 8532 / KCTC 2640 / LMG 13131 / VPI 4355).